The following is a 254-amino-acid chain: Pyridoxine 5'-phosphate synthase (254 aa).

Residue Asn8 coordinates 3-amino-2-oxopropyl phosphate. 10 to 11 (DH) provides a ligand contact to 1-deoxy-D-xylulose 5-phosphate. Arg19 contributes to the 3-amino-2-oxopropyl phosphate binding site. The Proton acceptor role is filled by His44. 1-deoxy-D-xylulose 5-phosphate is bound by residues Arg46 and His51. Residue Glu74 is the Proton acceptor of the active site. 1-deoxy-D-xylulose 5-phosphate is bound at residue Thr104. The Proton donor role is filled by His198. 3-amino-2-oxopropyl phosphate contacts are provided by residues Gly199 and 220-221 (GH).

It belongs to the PNP synthase family. In terms of assembly, homooctamer; tetramer of dimers.

It localises to the cytoplasm. The enzyme catalyses 3-amino-2-oxopropyl phosphate + 1-deoxy-D-xylulose 5-phosphate = pyridoxine 5'-phosphate + phosphate + 2 H2O + H(+). Its pathway is cofactor biosynthesis; pyridoxine 5'-phosphate biosynthesis; pyridoxine 5'-phosphate from D-erythrose 4-phosphate: step 5/5. Catalyzes the complicated ring closure reaction between the two acyclic compounds 1-deoxy-D-xylulose-5-phosphate (DXP) and 3-amino-2-oxopropyl phosphate (1-amino-acetone-3-phosphate or AAP) to form pyridoxine 5'-phosphate (PNP) and inorganic phosphate. In Caulobacter vibrioides (strain ATCC 19089 / CIP 103742 / CB 15) (Caulobacter crescentus), this protein is Pyridoxine 5'-phosphate synthase.